A 245-amino-acid polypeptide reads, in one-letter code: Ribonuclease 3 (245 aa).

The region spanning 17–146 (FTDKMKSLGL…FVGALYLDQG (130 aa)) is the RNase III domain. E59 is a binding site for Mg(2+). D63 is a catalytic residue. Mg(2+)-binding residues include D132 and E135. The active site involves E135. Residues 172–241 (DFKTQFQEYV…AEQAYKLMKN (70 aa)) enclose the DRBM domain.

The protein belongs to the ribonuclease III family. Homodimer. The cofactor is Mg(2+).

It localises to the cytoplasm. The catalysed reaction is Endonucleolytic cleavage to 5'-phosphomonoester.. Digests double-stranded RNA. Involved in the processing of primary rRNA transcript to yield the immediate precursors to the large and small rRNAs (23S and 16S). Processes some mRNAs, and tRNAs when they are encoded in the rRNA operon. Processes pre-crRNA and tracrRNA of type II CRISPR loci if present in the organism. The polypeptide is Ribonuclease 3 (Staphylococcus epidermidis (strain ATCC 12228 / FDA PCI 1200)).